A 225-amino-acid chain; its full sequence is 7-cyano-7-deazaguanine synthase (225 aa).

7 to 17 lines the ATP pocket; it reads LSGGMDSTTLL. The Zn(2+) site is built by Cys183, Cys191, Cys194, and Cys197.

This sequence belongs to the QueC family. As to quaternary structure, homodimer. The cofactor is Zn(2+).

It catalyses the reaction 7-carboxy-7-deazaguanine + NH4(+) + ATP = 7-cyano-7-deazaguanine + ADP + phosphate + H2O + H(+). The protein operates within purine metabolism; 7-cyano-7-deazaguanine biosynthesis. Catalyzes the ATP-dependent conversion of 7-carboxy-7-deazaguanine (CDG) to 7-cyano-7-deazaguanine (preQ(0)). In Caldicellulosiruptor saccharolyticus (strain ATCC 43494 / DSM 8903 / Tp8T 6331), this protein is 7-cyano-7-deazaguanine synthase.